A 392-amino-acid chain; its full sequence is Succinate--CoA ligase [ADP-forming] subunit beta (392 aa).

An ATP-grasp domain is found at 9-247 (KEILRVCGVP…LYEEDPKEIE (239 aa)). ATP is bound by residues Lys49, 56-58 (GRG), Glu102, Gln105, and Glu110. Asn202 and Asp216 together coordinate Mg(2+). Residues Asn267 and 324 to 326 (GIM) each bind substrate.

Belongs to the succinate/malate CoA ligase beta subunit family. In terms of assembly, heterotetramer of two alpha and two beta subunits. Mg(2+) serves as cofactor.

It catalyses the reaction succinate + ATP + CoA = succinyl-CoA + ADP + phosphate. The catalysed reaction is GTP + succinate + CoA = succinyl-CoA + GDP + phosphate. Its pathway is carbohydrate metabolism; tricarboxylic acid cycle; succinate from succinyl-CoA (ligase route): step 1/1. Its function is as follows. Succinyl-CoA synthetase functions in the citric acid cycle (TCA), coupling the hydrolysis of succinyl-CoA to the synthesis of either ATP or GTP and thus represents the only step of substrate-level phosphorylation in the TCA. The beta subunit provides nucleotide specificity of the enzyme and binds the substrate succinate, while the binding sites for coenzyme A and phosphate are found in the alpha subunit. The protein is Succinate--CoA ligase [ADP-forming] subunit beta of Neorickettsia sennetsu (strain ATCC VR-367 / Miyayama) (Ehrlichia sennetsu).